We begin with the raw amino-acid sequence, 122 residues long: UPF0231 protein VSAL_I2591 (122 aa).

This sequence belongs to the UPF0231 family.

The protein is UPF0231 protein VSAL_I2591 of Aliivibrio salmonicida (strain LFI1238) (Vibrio salmonicida (strain LFI1238)).